Here is a 583-residue protein sequence, read N- to C-terminus: Arginine--tRNA ligase (583 aa).

Residues 121–131 (ANPTGPLHLGH) carry the 'HIGH' region motif.

This sequence belongs to the class-I aminoacyl-tRNA synthetase family. In terms of assembly, monomer.

It is found in the cytoplasm. The enzyme catalyses tRNA(Arg) + L-arginine + ATP = L-arginyl-tRNA(Arg) + AMP + diphosphate. The polypeptide is Arginine--tRNA ligase (argS) (Aquifex aeolicus (strain VF5)).